Here is a 540-residue protein sequence, read N- to C-terminus: CTP synthase (540 aa).

Residues 1–273 form an amidoligase domain region; sequence MNNKDLKTKF…DDFILQHFKL (273 aa). A CTP-binding site is contributed by Ser19. A UTP-binding site is contributed by Ser19. An ATP-binding site is contributed by 20–25; it reads SLGKGI. Residue Tyr60 participates in L-glutamine binding. Asp77 contributes to the ATP binding site. 2 residues coordinate Mg(2+): Asp77 and Glu147. CTP is bound by residues 154 to 156, 194 to 199, and Lys230; these read DIE and KTKPTQ. Residues 194–199 and Lys230 each bind UTP; that span reads KTKPTQ. In terms of domain architecture, Glutamine amidotransferase type-1 spans 306–539; the sequence is YIVLHDAYLS…VEASLLNQKN (234 aa). Gly361 contacts L-glutamine. Residue Cys388 is the Nucleophile; for glutamine hydrolysis of the active site. L-glutamine contacts are provided by residues 389 to 392, Glu412, and Arg466; that span reads LGMQ. Catalysis depends on residues His512 and Glu514.

The protein belongs to the CTP synthase family. Homotetramer.

It carries out the reaction UTP + L-glutamine + ATP + H2O = CTP + L-glutamate + ADP + phosphate + 2 H(+). The catalysed reaction is L-glutamine + H2O = L-glutamate + NH4(+). The enzyme catalyses UTP + NH4(+) + ATP = CTP + ADP + phosphate + 2 H(+). It functions in the pathway pyrimidine metabolism; CTP biosynthesis via de novo pathway; CTP from UDP: step 2/2. With respect to regulation, allosterically activated by GTP, when glutamine is the substrate; GTP has no effect on the reaction when ammonia is the substrate. The allosteric effector GTP functions by stabilizing the protein conformation that binds the tetrahedral intermediate(s) formed during glutamine hydrolysis. Inhibited by the product CTP, via allosteric rather than competitive inhibition. Its function is as follows. Catalyzes the ATP-dependent amination of UTP to CTP with either L-glutamine or ammonia as the source of nitrogen. Regulates intracellular CTP levels through interactions with the four ribonucleotide triphosphates. The polypeptide is CTP synthase (Onion yellows phytoplasma (strain OY-M)).